The chain runs to 1400 residues: RNA polymerase II-associated protein 1 (1400 aa).

Disordered regions lie at residues 35–54, 60–95, 161–215, and 269–310; these read KGSRRRGDAHPDQLPPQDHR, DSLPDLPPALLPAPSKRARPSPGRPLPHDEDPEERL, VSDN…GKGL, and REQT…DKLE. Basic and acidic residues-rich tracts occupy residues 39–54 and 85–95; these read RRGDAHPDQLPPQDHR and LPHDEDPEERL. The segment covering 269-282 has biased composition (basic and acidic residues); sequence REQTETKATKEQNP. At T329 the chain carries Phosphothreonine. Residues 504 to 539 form a disordered region; sequence PSHDDKEDEDEDEELTKEKVNRKTPEEGSRPPPDLA. The span at 509–518 shows a compositional bias: acidic residues; it reads KEDEDEDEEL. The segment covering 519 to 539 has biased composition (basic and acidic residues); it reads TKEKVNRKTPEEGSRPPPDLA.

It belongs to the RPAP1 family. In terms of assembly, part of an RNA polymerase II complex that contains POLR2A, POLR2B, POLR2C, POLR2D, POLR2E, POLR2F, POLR2G, POLR2H, POLR2I, POLR2J, POLR2K, POLR2L, RPAP1, FCP1 plus the general transcription factors TFIIB and TFIIF.

It is found in the nucleus. Functionally, forms an interface between the RNA polymerase II enzyme and chaperone/scaffolding protein, suggesting that it is required to connect RNA polymerase II to regulators of protein complex formation. Required for interaction of the RNA polymerase II complex with acetylated histone H3. This Rattus norvegicus (Rat) protein is RNA polymerase II-associated protein 1 (Rpap1).